Reading from the N-terminus, the 334-residue chain is MTIIVTGAAGFIGSNIVKALNQRGITDIVAVDNLTKGEKFKNLAECEIAHYLDKHEFIRQVREHILPYQNIEAVFHQGACSDTMNHDGLYMMENNYQYTLDLLDWCQDERIPFLYASSAAVYGKGEIFREERELEKPLNVYGYSKFLFDQVLRRRMKEGLTAQVVGFRYFNVYGQHEQHKGRMASVAFHHFHQYREHGYVNLFGSNDGYGNGEQTRDFVSVEDVAKINLYFFDHPELSGIYNLGTGRSQQFNELAAATVNACRAAEGKSELSLKELVEEELIRYIPFPDALKGKYQGFTQADITKLREAGYKEEFFDVKAGVNRYVKWMLENLA.

NADP(+) is bound by residues 11–12, 32–33, Lys39, Lys54, 77–81, and Asn94; these read FI, DN, and QGACS. Tyr141 (proton acceptor) is an active-site residue. An NADP(+)-binding site is contributed by Lys145. Asn171 is a substrate binding site. NADP(+) is bound by residues Val172 and Lys180. Residue Lys180 is the Proton acceptor of the active site. Residues Arg182, His189, 203-206, Arg216, and Tyr295 contribute to the substrate site; that span reads FGSN.

Belongs to the NAD(P)-dependent epimerase/dehydratase family. HldD subfamily. In terms of assembly, homopentamer. NADP(+) serves as cofactor.

The catalysed reaction is ADP-D-glycero-beta-D-manno-heptose = ADP-L-glycero-beta-D-manno-heptose. Its pathway is nucleotide-sugar biosynthesis; ADP-L-glycero-beta-D-manno-heptose biosynthesis; ADP-L-glycero-beta-D-manno-heptose from D-glycero-beta-D-manno-heptose 7-phosphate: step 4/4. The protein operates within bacterial outer membrane biogenesis; LOS core biosynthesis. Its function is as follows. Catalyzes the interconversion between ADP-D-glycero-beta-D-manno-heptose and ADP-L-glycero-beta-D-manno-heptose via an epimerization at carbon 6 of the heptose. This chain is ADP-L-glycero-D-manno-heptose-6-epimerase, found in Neisseria gonorrhoeae.